A 337-amino-acid chain; its full sequence is Probable RuBisCO transcriptional regulator (337 aa).

The region spanning 6-63 (FTLDQLRILKAIAVEGSFKRAADSLYVSQPAVSLQVQNLERQLDVPLFDRGGRRAQLT) is the HTH lysR-type domain. The H-T-H motif DNA-binding region spans 23–42 (FKRAADSLYVSQPAVSLQVQ).

The protein belongs to the LysR transcriptional regulatory family.

In terms of biological role, trans-acting transcriptional regulator of RuBisCO genes (rbcL and rbcS) expression. In Trichormus variabilis (strain ATCC 29413 / PCC 7937) (Anabaena variabilis), this protein is Probable RuBisCO transcriptional regulator (rbcR).